The following is a 122-amino-acid chain: Large ribosomal subunit protein bL12 (122 aa).

Belongs to the bacterial ribosomal protein bL12 family. As to quaternary structure, homodimer. Part of the ribosomal stalk of the 50S ribosomal subunit. Forms a multimeric L10(L12)X complex, where L10 forms an elongated spine to which 2 to 4 L12 dimers bind in a sequential fashion. Binds GTP-bound translation factors.

Forms part of the ribosomal stalk which helps the ribosome interact with GTP-bound translation factors. Is thus essential for accurate translation. The polypeptide is Large ribosomal subunit protein bL12 (Enterococcus faecalis (strain ATCC 700802 / V583)).